The primary structure comprises 299 residues: Nucleotide-binding protein AFE_3021 (299 aa).

11–18 (GLSGSGKS) contacts ATP. Residue 62–65 (DVRN) coordinates GTP.

The protein belongs to the RapZ-like family.

Displays ATPase and GTPase activities. The polypeptide is Nucleotide-binding protein AFE_3021 (Acidithiobacillus ferrooxidans (strain ATCC 23270 / DSM 14882 / CIP 104768 / NCIMB 8455) (Ferrobacillus ferrooxidans (strain ATCC 23270))).